We begin with the raw amino-acid sequence, 206 residues long: Small ribosomal subunit protein uS4 (206 aa).

The S4 RNA-binding domain occupies Q96–A157.

Belongs to the universal ribosomal protein uS4 family. In terms of assembly, part of the 30S ribosomal subunit. Contacts protein S5. The interaction surface between S4 and S5 is involved in control of translational fidelity.

In terms of biological role, one of the primary rRNA binding proteins, it binds directly to 16S rRNA where it nucleates assembly of the body of the 30S subunit. Functionally, with S5 and S12 plays an important role in translational accuracy. The protein is Small ribosomal subunit protein uS4 of Idiomarina loihiensis (strain ATCC BAA-735 / DSM 15497 / L2-TR).